A 430-amino-acid chain; its full sequence is Hemagglutinin-esterase (430 aa).

A signal peptide spans 1-27 (MLRMRVRPPSAIPVFLIFVLLPFVLTS). The segment at 16 to 133 (LIFVLLPFVL…GSFGWVSNKV (118 aa)) is esterase domain first part. Residues 28-404 (KPITPHYGPG…ENVDVTSSAY (377 aa)) lie on the Virion surface side of the membrane. Catalysis depends on serine 49, which acts as the Nucleophile. An intrachain disulfide couples cysteine 53 to cysteine 69. 7 N-linked (GlcNAc...) asparagine; by host glycosylation sites follow: asparagine 88, asparagine 117, asparagine 159, asparagine 165, asparagine 247, asparagine 268, and asparagine 289. Intrachain disulfides connect cysteine 120–cysteine 168, cysteine 207–cysteine 284, and cysteine 215–cysteine 257. A receptor binding region spans residues 134 to 274 (GFYSKLYSMA…GVYNATTFGK (141 aa)). Residues 275 to 390 (FLIYPTKSYC…SCPQYYKLFE (116 aa)) form an esterase domain second part region. Residues cysteine 315 and cysteine 320 are joined by a disulfide bond. The N-linked (GlcNAc...) asparagine; by host glycan is linked to asparagine 324. Catalysis depends on charge relay system residues aspartate 336 and histidine 339. Asparagine 354 carries an N-linked (GlcNAc...) asparagine; by host glycan. Cysteine 357 and cysteine 382 form a disulfide bridge. A helical transmembrane segment spans residues 405 to 425 (FVATWVLLVLVIILIFILISF). The Intravirion segment spans residues 426–430 (CLSSY).

The protein belongs to the influenza type C/coronaviruses hemagglutinin-esterase family. N-glycosylated.

The protein resides in the virion membrane. It localises to the host cell membrane. It catalyses the reaction N-acetyl-9-O-acetylneuraminate + H2O = N-acetylneuraminate + acetate + H(+). The catalysed reaction is N-acetyl-4-O-acetylneuraminate + H2O = N-acetylneuraminate + acetate + H(+). Functionally, structural protein that makes short spikes at the surface of the virus. Contains receptor binding and receptor-destroying activities. Mediates de-O-acetylation of N-acetyl-9-O-acetylneuraminic acid, which is probably the receptor determinant recognized by the virus on the surface of erythrocytes and susceptible cells. This receptor-destroying activity is important for virus release as it probably helps preventing self-aggregation and ensures the efficient spread of the progeny virus from cell to cell. May serve as a secondary viral attachment protein for initiating infection, the spike protein being the major one. Seems to be a 'luxury' protein that is not absolutely necessary for virus infection in culture. However, its presence in the virus may alter its pathogenicity. May become a target for both the humoral and the cellular branches of the immune system. The chain is Hemagglutinin-esterase (HE) from Porcine torovirus (strain P10) (PoTV).